The chain runs to 234 residues: 7-cyano-7-deazaguanine synthase (234 aa).

13-23 is a binding site for ATP; that stretch reads FSGGIDSTTCL. The Zn(2+) site is built by cysteine 197, cysteine 207, cysteine 210, and cysteine 213.

Belongs to the QueC family. Zn(2+) is required as a cofactor.

It carries out the reaction 7-carboxy-7-deazaguanine + NH4(+) + ATP = 7-cyano-7-deazaguanine + ADP + phosphate + H2O + H(+). It functions in the pathway purine metabolism; 7-cyano-7-deazaguanine biosynthesis. Catalyzes the ATP-dependent conversion of 7-carboxy-7-deazaguanine (CDG) to 7-cyano-7-deazaguanine (preQ(0)). The chain is 7-cyano-7-deazaguanine synthase from Syntrophobacter fumaroxidans (strain DSM 10017 / MPOB).